Consider the following 659-residue polypeptide: Centrosomal protein of 76 kDa (659 aa).

A phosphoserine mark is found at Ser-75 and Ser-83.

It belongs to the CEP76 family. Interacts with CCP110 and CEP97.

The protein resides in the cytoplasm. Its subcellular location is the cytoskeleton. It is found in the microtubule organizing center. The protein localises to the centrosome. It localises to the centriole. Functionally, centrosomal protein involved in regulation of centriole duplication. Required to limit centriole duplication to once per cell cycle by preventing centriole reduplication. The sequence is that of Centrosomal protein of 76 kDa (CEP76) from Homo sapiens (Human).